Here is a 111-residue protein sequence, read N- to C-terminus: X antigen family member 3 (111 aa).

Residues 1 to 111 (MIWRGRSTYR…PEGGDRQPQV (111 aa)) are disordered. Positions 29 to 40 (PGDEEPQQEEPP) are enriched in acidic residues. Residues 97–111 (EQFKMPEGGDRQPQV) are compositionally biased toward basic and acidic residues.

The protein belongs to the GAGE family.

The chain is X antigen family member 3 (XAGE3) from Homo sapiens (Human).